The primary structure comprises 561 residues: Rho guanine nucleotide exchange factor 9 (561 aa).

The region spanning 53–112 is the SH3 domain; that stretch reads DSIVSAEAVWDHVTMANRELAFKAGDVIKVLDASNKDWWWGQIDDEEGWFPASFVRLWVN. The interaction with GPHN stretch occupies residues 145–155; it reads RDQMRANVINE. A DH domain is found at 148 to 332; it reads MRANVINEIM…RNVTQQINER (185 aa). The 108-residue stretch at 363-470 folds into the PH domain; that stretch reads ELIYTGEMAW…WLRAFREERK (108 aa). The tract at residues 499–524 is disordered; sequence KQKGVNSARSVPPSYPPPQDPLNQGQ. At S547 the chain carries Phosphoserine.

As to quaternary structure, interacts with GPHN.

It is found in the cytoplasm. Its subcellular location is the postsynaptic density. Functionally, acts as a guanine nucleotide exchange factor (GEF) for CDC42. Promotes formation of GPHN clusters. In Bos taurus (Bovine), this protein is Rho guanine nucleotide exchange factor 9 (ARHGEF9).